The following is a 215-amino-acid chain: Peroxiredoxin-5, mitochondrial (215 aa).

The N-terminal 53 residues, 1 to 53 (MGLAGVCVLRRSAGYILGGAAGQSVAATAAARRRSEGGWASGGVRSFSRAAAA), are a transit peptide targeting the mitochondrion. Residues 57-215 (IKVGDAIPAV…SLAPSIISQL (159 aa)) enclose the Thioredoxin domain. K76 carries the post-translational modification N6-acetyllysine. K84 carries the post-translational modification N6-acetyllysine; alternate. Position 84 is an N6-succinyllysine; alternate (K84). C101 functions as the Cysteine sulfenic acid (-SOH) intermediate in the catalytic mechanism. C101 is lipidated: S-palmitoyl cysteine. C101 and C205 are oxidised to a cystine. K117 carries the N6-succinyllysine modification. Phosphoserine is present on residues S172 and S183. The Microbody targeting signal motif lies at 213–215 (SQL).

This sequence belongs to the peroxiredoxin family. Prx5 subfamily. Monomer. In terms of processing, S-palmitoylated. Palmitoylation occurs on the active site, inhibiting its reactivity; therefore PRDX5 palmitoylation status determines its antioxidant capacity. Post-translationally, S-palmitoylated. Depalmitoylated by ABHD10.

It localises to the mitochondrion. Its subcellular location is the cytoplasm. It is found in the peroxisome matrix. The catalysed reaction is a hydroperoxide + [thioredoxin]-dithiol = an alcohol + [thioredoxin]-disulfide + H2O. Its function is as follows. Thiol-specific peroxidase that catalyzes the reduction of hydrogen peroxide and organic hydroperoxides to water and alcohols, respectively. Plays a role in cell protection against oxidative stress by detoxifying peroxides and as sensor of hydrogen peroxide-mediated signaling events. The protein is Peroxiredoxin-5, mitochondrial (PRDX5) of Papio hamadryas (Hamadryas baboon).